A 325-amino-acid chain; its full sequence is NADH-quinone oxidoreductase subunit H (325 aa).

Transmembrane regions (helical) follow at residues 11 to 31 (ILLTVLKAVVILLVVVTCGAF), 50 to 69 (SRVGWGGSLQLVADMIKMFF), 81 to 101 (LIFTLAPMIAFCSLLLSFAIV), 114 to 134 (IGILFFLMMAGLAVYAVLFAG), 154 to 174 (LSYEVFLGLSLMGVVAQAGSF), 186 to 206 (LWNIIPQFFGFLTFIIAGVAV), 237 to 257 (FFVGEYIGIVTISALIVTLFF), 265 to 285 (LPPFIWFAIKTAFFMVMFILV), and 304 to 324 (ICLPLTLINLLVTAAVILYHA).

This sequence belongs to the complex I subunit 1 family. NDH-1 is composed of 13 different subunits. Subunits NuoA, H, J, K, L, M, N constitute the membrane sector of the complex.

It is found in the cell inner membrane. It catalyses the reaction a quinone + NADH + 5 H(+)(in) = a quinol + NAD(+) + 4 H(+)(out). Its function is as follows. NDH-1 shuttles electrons from NADH, via FMN and iron-sulfur (Fe-S) centers, to quinones in the respiratory chain. The immediate electron acceptor for the enzyme in this species is believed to be ubiquinone. Couples the redox reaction to proton translocation (for every two electrons transferred, four hydrogen ions are translocated across the cytoplasmic membrane), and thus conserves the redox energy in a proton gradient. This subunit may bind ubiquinone. This Edwardsiella ictaluri (strain 93-146) protein is NADH-quinone oxidoreductase subunit H.